The chain runs to 129 residues: MARDKVRVKKKASKNIAAGVAHVNSSFNNTKILISDVQGNAISWSSAGTMGFKGSRKSTPYAAQMAAEDAGRKAQEHGVKTLEVEVQGPGSGRESALRALAAAGFNITSIRDVTPMAHNGCRPPKRRRV.

It belongs to the universal ribosomal protein uS11 family. Part of the 30S ribosomal subunit. Interacts with proteins S7 and S18. Binds to IF-3.

Located on the platform of the 30S subunit, it bridges several disparate RNA helices of the 16S rRNA. Forms part of the Shine-Dalgarno cleft in the 70S ribosome. The polypeptide is Small ribosomal subunit protein uS11 (Roseobacter denitrificans (strain ATCC 33942 / OCh 114) (Erythrobacter sp. (strain OCh 114))).